Consider the following 244-residue polypeptide: Protein crossbronx (244 aa).

In terms of domain architecture, UBC core spans 20–176 (QQEYKILAEY…VQKNIKESKE (157 aa)). The interval 209–244 (AGRSKQTEPSAQQANGGHATGLSWVKEGEFKPLSIE) is disordered.

It belongs to the ubiquitin-conjugating enzyme family. FTS subfamily.

This Drosophila erecta (Fruit fly) protein is Protein crossbronx (cbx).